The primary structure comprises 623 residues: Glutathione import ATP-binding protein GsiA (623 aa).

2 ABC transporter domains span residues 15-269 (VENL…RALL) and 314-564 (LRVR…RKLL). ATP is bound by residues 49–56 (GESGSGKS) and 357–364 (GESGSGKS).

The protein belongs to the ABC transporter superfamily. Glutathione importer (TC 3.A.1.5.11) family. The complex is composed of two ATP-binding proteins (GsiA), two transmembrane proteins (GsiC and GsiD) and a solute-binding protein (GsiB).

It localises to the cell inner membrane. The catalysed reaction is glutathione(out) + ATP + H2O = glutathione(in) + ADP + phosphate + H(+). Its function is as follows. Part of the ABC transporter complex GsiABCD involved in glutathione import. Responsible for energy coupling to the transport system. The sequence is that of Glutathione import ATP-binding protein GsiA from Escherichia coli O6:H1 (strain CFT073 / ATCC 700928 / UPEC).